The chain runs to 121 residues: MARIAGIDIPREKRVEIALTYVYGIGLTRSKLILANTGVNPDTRVKDLSDSDVQKLRGATEEFTLEGDLRRKEGMALKRLQDIGCVRGRRHRMSLPVRGQRTRTNARTRRGSRKTVAGRKK.

Residues 91–121 are disordered; the sequence is HRMSLPVRGQRTRTNARTRRGSRKTVAGRKK. Positions 100–121 are enriched in basic residues; the sequence is QRTRTNARTRRGSRKTVAGRKK.

This sequence belongs to the universal ribosomal protein uS13 family. In terms of assembly, part of the 30S ribosomal subunit. Forms a loose heterodimer with protein S19. Forms two bridges to the 50S subunit in the 70S ribosome.

Functionally, located at the top of the head of the 30S subunit, it contacts several helices of the 16S rRNA. In the 70S ribosome it contacts the 23S rRNA (bridge B1a) and protein L5 of the 50S subunit (bridge B1b), connecting the 2 subunits; these bridges are implicated in subunit movement. Contacts the tRNAs in the A and P-sites. This chain is Small ribosomal subunit protein uS13, found in Prochlorococcus marinus (strain MIT 9301).